The sequence spans 1028 residues: MSDTPSLTLSALLARRDWENPVVTQWNRLAAHAPLHSWRNEPSARDDAGSARRQTLNGLWRFSYFTAPEQVPQAWVTEDCADAVAMPVPSNWQMQGFDTPIYTNVTYPIPVNPPFVPQENPTGCYSLTFEVDDAWLQSGQTRIIFDGVNSAFHLWCNGQWIGYSQDSRLPAEFDLSAALRPGQNRLAVMVLRWCDGSYLEDQDMWRMSGIFRDVTLLHKPETQIADYHVVTDLNAELDRAVLKVDVTLAGAGFADGEVVFTLWRKGEKCASVSRQPGSAIVDERGSWAERLTVTIPVETPALWSAETPELYRLTMALLNPQGEVLEIEACDVGFRRVEISNGLLKLNGKPLLIRGVNRHEHHSENGQVMDEATMRRDIETMKQHSFNAVRCSHYPNHPLWYQLCDRYGLYVVDEANIETHGMVPMSRLADDPRWLPAMSERVTRMVQRDRNHPSIIIWSLGNESGHGANHDALYRWLKTTDPTRPVQYEGGGANTAATDIVCPMYARVDRDQPFPAVPKWSIKKWIGMPDETRPLILCEYAHAMGNSFGGFAKYWQAFRSHPRLQGGFVWDWVDQALTKRDEDGNTFWAYGGDFGDKPNDRQFCLNGLVFPDRTPHPALYEAHGPQQFFTFTRVSTSPLVIEVQSGYLFRHTDNEVLNWTVARDGDVLVAGEVTLAMVPEGTQRLEIALPELNAGPGEVWLNVEVRQPRATPWSPAAIAAAGSSGRFRLRSLLLRQPRRRAAVLTQTDRILEIAHRQQRWQFDRASGNLTQWWRNGVETLLSPLTDNVSRAPLDNDIGVSEATKIDPNAWVERWKAAGMYDLTPRVLHCEAEQHAGEVVVTTQHVLEYRGKALFLSRKVWRIDEQGVLHGDIQVDMASDIPEPARIGLSVHLAETPENVRWLGLGPHENYPDRKLAAQQGRWTLPLEAMHTPYIFPTENGLRCDTRELVVGMHQLNGHFHFSVSRYSQQQLRETTHHHLLREEPGCWLNLDAFHMGVGGDDSWSPSVSPEFILQTRQLRYTFSWQQNP.

Substrate-binding residues include N104 and D203. Residue D203 coordinates Na(+). Residues E418, H420, and E463 each contribute to the Mg(2+) site. Residues E463 and 539–542 each bind substrate; that span reads EYAH. E463 acts as the Proton donor in catalysis. The Nucleophile role is filled by E539. N599 is a Mg(2+) binding site. Residues F603 and N606 each contribute to the Na(+) site. Substrate is bound by residues N606 and W1003.

It belongs to the glycosyl hydrolase 2 family. In terms of assembly, homotetramer. Mg(2+) is required as a cofactor. Na(+) serves as cofactor.

The catalysed reaction is Hydrolysis of terminal non-reducing beta-D-galactose residues in beta-D-galactosides.. The polypeptide is Beta-galactosidase (Enterobacter cloacae).